The chain runs to 353 residues: uncharacterized protein (353 aa).

The next 9 helical transmembrane spans lie at alanine 16 to glycine 36, valine 77 to leucine 97, tyrosine 106 to leucine 128, serine 140 to alanine 160, leucine 167 to alanine 187, glycine 208 to isoleucine 228, leucine 263 to proline 283, histidine 296 to serine 316, and isoleucine 323 to leucine 343.

The protein belongs to the binding-protein-dependent transport system permease family. FecCD subfamily. As to quaternary structure, the complex is composed of two ATP-binding proteins (YvrA), two transmembrane proteins (YvrB) and a solute-binding protein (YvrC).

The protein resides in the cell membrane. Probably part of an ABC transporter complex. Probably responsible for the translocation of the substrate across the membrane. This is an uncharacterized protein from Bacillus subtilis (strain 168).